Consider the following 379-residue polypeptide: Chaperone protein DnaJ (379 aa).

A J domain is found at 5–70 (DYYELLEVSR…QKRAAYDQFG (66 aa)). The CR-type zinc finger occupies 135–213 (GKEVEITVPR…CHGQGRVRES (79 aa)). Cys-148, Cys-151, Cys-165, Cys-168, Cys-187, Cys-190, Cys-201, and Cys-204 together coordinate Zn(2+). 4 CXXCXGXG motif repeats span residues 148 to 155 (CTVCEGSG), 165 to 172 (CETCQGMG), 187 to 194 (CPTCHGEG), and 201 to 208 (CASCHGQG).

The protein belongs to the DnaJ family. Homodimer. Zn(2+) serves as cofactor.

The protein localises to the cytoplasm. Functionally, participates actively in the response to hyperosmotic and heat shock by preventing the aggregation of stress-denatured proteins and by disaggregating proteins, also in an autonomous, DnaK-independent fashion. Unfolded proteins bind initially to DnaJ; upon interaction with the DnaJ-bound protein, DnaK hydrolyzes its bound ATP, resulting in the formation of a stable complex. GrpE releases ADP from DnaK; ATP binding to DnaK triggers the release of the substrate protein, thus completing the reaction cycle. Several rounds of ATP-dependent interactions between DnaJ, DnaK and GrpE are required for fully efficient folding. Also involved, together with DnaK and GrpE, in the DNA replication of plasmids through activation of initiation proteins. This Legionella pneumophila (strain Lens) protein is Chaperone protein DnaJ.